The chain runs to 191 residues: MKTLFDTKELLNEFDINLIGIDEAGRGALAGPMMMAACKLNKQLDGLCDSKKLSEKKREELYEIIIKNSNYLILAFSSEQIDALGLSTCLKKGLKLIKKHFKTENNFLYDGNTNLGINGIKTQIKADTSILQVSAASILAKVSKDRVMNFLAKDFPCYEFEKNKAYGTKAHKEFIAKFGICKLHRKSFKLL.

In terms of domain architecture, RNase H type-2 spans 16 to 191 (INLIGIDEAG…KLHRKSFKLL (176 aa)). Residues D22, E23, and D110 each contribute to the a divalent metal cation site.

It belongs to the RNase HII family. Mn(2+) is required as a cofactor. Requires Mg(2+) as cofactor.

The protein localises to the cytoplasm. It catalyses the reaction Endonucleolytic cleavage to 5'-phosphomonoester.. Endonuclease that specifically degrades the RNA of RNA-DNA hybrids. The sequence is that of Ribonuclease HII (rnhB) from Campylobacter jejuni subsp. jejuni serotype O:2 (strain ATCC 700819 / NCTC 11168).